We begin with the raw amino-acid sequence, 314 residues long: Phospholipid phosphatase-related protein type 5 (314 aa).

A run of 6 helical transmembrane segments spans residues Phe-5 to Ala-25, Ile-61 to Gly-81, Phe-120 to Val-140, Ala-194 to Ala-214, Val-223 to Tyr-243, and Val-250 to Asn-270.

It belongs to the PA-phosphatase related phosphoesterase family.

It localises to the cell membrane. Its function is as follows. Induces filopodia formation and promotes neurite growth. The protein is Phospholipid phosphatase-related protein type 5 of Xenopus laevis (African clawed frog).